Consider the following 415-residue polypeptide: Beta-1,4-glucuronyltransferase 1 (415 aa).

Over 1–8 (MQMSYAIR) the chain is Cytoplasmic. Residues 9-36 (CAFYQLLLAALMLVAMLQLLYLSLLSGL) traverse the membrane as a helical; Signal-anchor for type II membrane protein segment. At 37-415 (HGQEEQDQYF…AKYPNSPRRC (379 aa)) the chain is on the lumenal side. Asn204 carries N-linked (GlcNAc...) asparagine glycosylation. Asp227 and Asp229 together coordinate Mn(2+). Asn300 is a glycosylation site (N-linked (GlcNAc...) asparagine).

This sequence belongs to the glycosyltransferase 49 family. As to quaternary structure, interacts with LARGE1 and LARGE2. Mn(2+) serves as cofactor.

Its subcellular location is the golgi apparatus membrane. It carries out the reaction 3-O-[beta-D-Xyl-(1-&gt;4)-Rib-ol-P-Rib-ol-P-3-beta-D-GalNAc-(1-&gt;3)-beta-D-GlcNAc-(1-&gt;4)-(O-6-P-alpha-D-Man)]-Thr-[protein] + UDP-alpha-D-glucuronate = 3-O-[beta-D-GlcA-(1-&gt;3)-beta-D-Xyl-(1-&gt;4)-Rib-ol-P-Rib-ol-P-3-beta-D-GalNAc-(1-&gt;3)-beta-D-GlcNAc-(1-&gt;4)-(O-6-P-alpha-D-Man)]-Thr-[protein] + UDP + H(+). The protein operates within protein modification; protein glycosylation. In terms of biological role, beta-1,4-glucuronyltransferase involved in O-mannosylation of alpha-dystroglycan (DAG1). Transfers a glucuronic acid (GlcA) residue onto a xylose (Xyl) acceptor to produce the glucuronyl-beta-1,4-xylose-beta disaccharide primer, which is further elongated by LARGE1, during synthesis of phosphorylated O-mannosyl glycan. Phosphorylated O-mannosyl glycan is a carbohydrate structure present in alpha-dystroglycan (DAG1), which is required for binding laminin G-like domain-containing extracellular proteins with high affinity. Required for axon guidance; via its function in O-mannosylation of alpha-dystroglycan (DAG1). In Pongo abelii (Sumatran orangutan), this protein is Beta-1,4-glucuronyltransferase 1.